An 84-amino-acid chain; its full sequence is U-scoloptoxin(10)-Er1a (84 aa).

The N-terminal stretch at 1–24 (MSRFCLLFVAFGFVLYFLHMEVTG) is a signal peptide.

Belongs to the scoloptoxin-10 family. In terms of processing, contains 3 disulfide bonds. Expressed by the venom gland.

Its subcellular location is the secreted. This is U-scoloptoxin(10)-Er1a from Ethmostigmus rubripes (Giant centipede).